We begin with the raw amino-acid sequence, 454 residues long: Macrophage scavenger receptor types I and II (454 aa).

The disordered stretch occupies residues 1-22 (MAQWDSFTDQQEDTDSCSESVK). At 1–50 (MAQWDSFTDQQEDTDSCSESVKFDARSNTALLPPNPKNGPPLQEKLKSFK) the chain is on the cytoplasmic side. Residue Ser27 is modified to Phosphoserine. A helical; Signal-anchor for type II membrane protein transmembrane segment spans residues 51–73 (AALIALYLLVFAVLIPIIAIMAA). Positions 74–109 (QLLKWEMKNCTVGSINANSVSSSLLGRGNDSEHEVR) are spacer. Residues 74-454 (QLLKWEMKNC…GEDAGVTCTL (381 aa)) are Extracellular-facing. N-linked (GlcNAc...) asparagine glycosylation is found at Asn82, Asn102, Asn143, Asn184, Asn221, Asn249, and Asn267. Residues 199–256 (VKFQENTLKGQEEISKLKERVHNASAEIMSMKEEQVHLEQEIKREVKVLNNITNDLRL) adopt a coiled-coil conformation. Residues 267 to 347 (NITLIQGPPG…KGEKGSGSIL (81 aa)) form a disordered region. The Collagen-like domain maps to 273–344 (GPPGPPGEKG…KGQKGEKGSG (72 aa)). In terms of domain architecture, SRCR spans 353–453 (VRLVGGRGPH…HGEDAGVTCT (101 aa)). Disulfide bonds link Cys378-Cys442, Cys391-Cys452, and Cys422-Cys432.

In terms of assembly, homotrimer. Interacts with MYO18A.

Its subcellular location is the membrane. In terms of biological role, membrane glycoproteins implicated in the pathologic deposition of cholesterol in arterial walls during atherogenesis. Two types of receptor subunits exist. These receptors mediate the endocytosis of a diverse group of macromolecules, including modified low density lipoproteins (LDL). The protein is Macrophage scavenger receptor types I and II (MSR1) of Oryctolagus cuniculus (Rabbit).